Consider the following 627-residue polypeptide: 1-deoxy-D-xylulose-5-phosphate synthase (627 aa).

Residues His76 and 117-119 (SHA) each bind thiamine diphosphate. Asp148 provides a ligand contact to Mg(2+). Thiamine diphosphate contacts are provided by residues 149–150 (GA), Asn178, Phe288, and Glu370. Asn178 lines the Mg(2+) pocket.

It belongs to the transketolase family. DXPS subfamily. As to quaternary structure, homodimer. Requires Mg(2+) as cofactor. Thiamine diphosphate serves as cofactor.

It catalyses the reaction D-glyceraldehyde 3-phosphate + pyruvate + H(+) = 1-deoxy-D-xylulose 5-phosphate + CO2. It functions in the pathway metabolic intermediate biosynthesis; 1-deoxy-D-xylulose 5-phosphate biosynthesis; 1-deoxy-D-xylulose 5-phosphate from D-glyceraldehyde 3-phosphate and pyruvate: step 1/1. Catalyzes the acyloin condensation reaction between C atoms 2 and 3 of pyruvate and glyceraldehyde 3-phosphate to yield 1-deoxy-D-xylulose-5-phosphate (DXP). The sequence is that of 1-deoxy-D-xylulose-5-phosphate synthase from Cutibacterium acnes (strain DSM 16379 / KPA171202) (Propionibacterium acnes).